The following is a 311-amino-acid chain: Dermonecrotic toxin LlSicTox-alphaIII1i (311 aa).

An N-terminal signal peptide occupies residues 1 to 21 (MYAHLALILGCWTVVLQGAET). The propeptide occupies 22–26 (DVGER). Residue H38 is part of the active site. Residues E58 and D60 each coordinate Mg(2+). The active-site Nucleophile is the H73. C77 and C83 form a disulfide bridge. Residue D117 participates in Mg(2+) binding.

Belongs to the arthropod phospholipase D family. Class I subfamily. Requires Mg(2+) as cofactor. As to expression, expressed by the venom gland.

The protein resides in the secreted. It carries out the reaction an N-(acyl)-sphingosylphosphocholine = an N-(acyl)-sphingosyl-1,3-cyclic phosphate + choline. The catalysed reaction is an N-(acyl)-sphingosylphosphoethanolamine = an N-(acyl)-sphingosyl-1,3-cyclic phosphate + ethanolamine. It catalyses the reaction a 1-acyl-sn-glycero-3-phosphocholine = a 1-acyl-sn-glycero-2,3-cyclic phosphate + choline. The enzyme catalyses a 1-acyl-sn-glycero-3-phosphoethanolamine = a 1-acyl-sn-glycero-2,3-cyclic phosphate + ethanolamine. Functionally, dermonecrotic toxins cleave the phosphodiester linkage between the phosphate and headgroup of certain phospholipids (sphingolipid and lysolipid substrates), forming an alcohol (often choline) and a cyclic phosphate. This toxin acts on sphingomyelin (SM) with high activity. It also act on acyl- and alkyl-lysophosphatidylcholine (LPC), but not on sphingosylphosphorylcholine (SPC) and phosphatidylcholine (PC). It may also act on ceramide phosphoethanolamine (CPE), and lysophosphatidylethanolamine (LPE), but not on lysophosphatidylserine (LPS), and lysophosphatidylglycerol (LPG). It acts by transphosphatidylation, releasing exclusively cyclic phosphate products as second products. Induces complement-dependent hemolysis and dermonecrosis. Also induces increased vascular permeability, edema, inflammatory response, and platelet aggregation. This is Dermonecrotic toxin LlSicTox-alphaIII1i from Loxosceles laeta (South American recluse spider).